Reading from the N-terminus, the 324-residue chain is Acetyl-coenzyme A carboxylase carboxyl transferase subunit alpha (324 aa).

The 255-residue stretch at 37–291 folds into the CoA carboxyltransferase C-terminal domain; sequence ILEEKLENLE…DLMIRKTFEQ (255 aa).

Belongs to the AccA family. Acetyl-CoA carboxylase is a heterohexamer composed of biotin carboxyl carrier protein (AccB), biotin carboxylase (AccC) and two subunits each of ACCase subunit alpha (AccA) and ACCase subunit beta (AccD).

It localises to the cytoplasm. The enzyme catalyses N(6)-carboxybiotinyl-L-lysyl-[protein] + acetyl-CoA = N(6)-biotinyl-L-lysyl-[protein] + malonyl-CoA. It participates in lipid metabolism; malonyl-CoA biosynthesis; malonyl-CoA from acetyl-CoA: step 1/1. In terms of biological role, component of the acetyl coenzyme A carboxylase (ACC) complex. First, biotin carboxylase catalyzes the carboxylation of biotin on its carrier protein (BCCP) and then the CO(2) group is transferred by the carboxyltransferase to acetyl-CoA to form malonyl-CoA. This is Acetyl-coenzyme A carboxylase carboxyl transferase subunit alpha from Bacillus cereus (strain B4264).